Consider the following 100-residue polypeptide: Small ribosomal subunit protein uS14c (100 aa).

It belongs to the universal ribosomal protein uS14 family. In terms of assembly, part of the 30S ribosomal subunit.

It localises to the plastid. The protein resides in the chloroplast. Binds 16S rRNA, required for the assembly of 30S particles. The chain is Small ribosomal subunit protein uS14c from Arabis hirsuta (Hairy rock-cress).